A 129-amino-acid polypeptide reads, in one-letter code: Transcription factor bHLH138 (129 aa).

Positions 1–18 (MERYTKKNERFKAEEGKG) are enriched in basic and acidic residues. Residues 1–24 (MERYTKKNERFKAEEGKGSKKSRT) are disordered. Residues 19–68 (SKKSRTFLTERERRALFNDRFFDLKNLIPNPTKGGEASIVQDGIVYINEL) enclose the bHLH domain.

It belongs to the bHLH protein family.

The protein localises to the nucleus. The chain is Transcription factor bHLH138 from Arabidopsis thaliana (Mouse-ear cress).